Here is a 191-residue protein sequence, read N- to C-terminus: MAAQIPIVAATSTPTVARNSKKRPASPSHNSSGGGYGASKKKKLSASGFAQGVSIEAMSESKMASSELSSGPVEKAAKPLPFKDPNFVHSGHGGAVAGKKNRTWKNLKQILAAERALPWQLNDPNYFSIDAPPSFKPAKKYSDVSGLLANYTDPQSKLRFSTVEEFSYIRRLPSDVVTGYLTLRKATSIVP.

The interval 1–41 is disordered; sequence MAAQIPIVAATSTPTVARNSKKRPASPSHNSSGGGYGASKK.

Component of the chromatin remodeling INO80 complex; specifically part of a complex module associated with the helicase ATP-binding and the helicase C-terminal domain of INO80. Component of some MLL1/MLL complex, at least composed of the core components KMT2A/MLL1, ASH2L, HCFC1/HCF1, WDR5 and RBBP5, as well as the facultative components BACC1, CHD8, E2F6, HSP70, INO80C, KANSL1, LAS1L, MAX, MCRS1, MGA, MYST1/MOF, PELP1, PHF20, PRP31, RING2, RUVB1/TIP49A, RUVB2/TIP49B, SENP3, TAF1, TAF4, TAF6, TAF7, TAF9 and TEX10.

It localises to the nucleus. Proposed core component of the chromatin remodeling INO80 complex which is involved in transcriptional regulation, DNA replication and probably DNA repair. This chain is INO80 complex subunit C (Ino80c), found in Rattus norvegicus (Rat).